Consider the following 927-residue polypeptide: Non-lysosomal glucosylceramidase (927 aa).

A disordered region spans residues 32 to 62 (EETGGTKDVQVTDCKSPEDSRPPKETDCCNP). Over residues 46 to 58 (KSPEDSRPPKETD) the composition is skewed to basic and acidic residues.

This sequence belongs to the non-lysosomal glucosylceramidase family. In terms of tissue distribution, widely expressed. Mainly expressed in brain, heart, skeletal muscle, kidney and placenta and expressed at lower levels in liver, spleen, small intestine and lung. Detectable in colon, thymus and peripheral blood leukocytes.

The protein localises to the endoplasmic reticulum membrane. It localises to the golgi apparatus membrane. The catalysed reaction is a beta-D-glucosyl-(1&lt;-&gt;1')-N-acylsphing-4-enine + H2O = an N-acylsphing-4-enine + D-glucose. The enzyme catalyses a beta-D-galactosyl-(1&lt;-&gt;1')-N-acylsphing-4-enine + H2O = an N-acylsphing-4-enine + D-galactose. It carries out the reaction beta-D-glucosyl-(1-&gt;3)-O-lithocholate + H2O = lithocholate + D-glucose. It catalyses the reaction beta-D-glucosyl-(1-&gt;3)-O-chenodeoxycholate + H2O = chenodeoxycholate + D-glucose. The catalysed reaction is a di-trans,poly-cis-dolichyl beta-D-glucosyl phosphate + chenodeoxycholate = beta-D-glucosyl-(1-&gt;3)-O-chenodeoxycholate + a di-trans,poly-cis-dolichyl phosphate + H(+). The enzyme catalyses octyl beta-D-glucose + chenodeoxycholate = beta-D-glucosyl-(1-&gt;3)-O-chenodeoxycholate + octan-1-ol. It carries out the reaction cholesteryl 3-beta-D-glucoside + H2O = cholesterol + D-glucose. It catalyses the reaction a beta-D-glucosyl-(1&lt;-&gt;1')-N-acylsphing-4-enine + cholesterol = cholesteryl 3-beta-D-glucoside + an N-acylsphing-4-enine. The catalysed reaction is beta-D-glucosyl-N-(9Z-octadecenoyl)-sphing-4E-enine + cholesterol = N-(9Z-octadecenoyl)-sphing-4-enine + cholesteryl 3-beta-D-glucoside. The enzyme catalyses a beta-D-galactosyl-(1&lt;-&gt;1')-N-acylsphing-4-enine + cholesterol = cholesteryl 3-beta-D-galactoside + an N-acylsphing-4-enine. It carries out the reaction 1-(beta-D-galactosyl)-N-dodecanoylsphing-4-enine + cholesterol = cholesteryl 3-beta-D-galactoside + N-dodecanoylsphing-4-enine. It participates in lipid metabolism; sphingolipid metabolism. It functions in the pathway steroid metabolism; cholesterol metabolism. Its activity is regulated as follows. Inhibited by AMP-DMN/N -((5-adamantane-1-yl-methoxy)pentyl)-deoxynojirimycin. Activated by Mn(2+), Co(2+) and Mg(2+) and inhibited by Zn(2+). Enzymatic activity is dependent on membrane association and requires the presence of lipids. The membrane-associated enzyme is not inhibited by condutiriol B epoxide and bromocondutiriol B epoxide. Non-lysosomal glucosylceramidase that catalyzes the hydrolysis of glucosylceramides/GlcCers (such as beta-D-glucosyl-(1&lt;-&gt;1')-N-acylsphing-4-enine) to free glucose and ceramides (such as N-acylsphing-4-enine). GlcCers are membrane glycosphingolipids that have a wide intracellular distribution. They are the main precursors of more complex glycosphingolipids that play a role in cellular growth, differentiation, adhesion, signaling, cytoskeletal dynamics and membrane properties. Involved in the transglucosylation of cholesterol, transfers glucose from GlcCer to cholesterol, thereby modifying its water solubility and biological properties. Under specific conditions, may catalyze the reverse reaction, transferring glucose from cholesteryl-3-beta-D-glucoside to ceramide (such as N-acylsphing-4-enine). May play a role in the metabolism of bile acids. Able to hydrolyze bile acid 3-O-glucosides as well as to produce bile acid-glucose conjugates thanks to a bile acid glucosyl transferase activity. Catalyzes the hydrolysis of galactosylceramides/GalCers (such as beta-D-galactosyl-(1&lt;-&gt;1')-N-acylsphing-4-enine), as well as the galactosyl transfer between GalCers and cholesterol in vitro with lower activity compared with their activity against GlcCers. This Homo sapiens (Human) protein is Non-lysosomal glucosylceramidase.